The chain runs to 185 residues: Thymidine kinase (185 aa).

8–15 (GPMYSGKT) lines the ATP pocket. Glu85 (proton acceptor) is an active-site residue. Phe117 contacts substrate. The Zn(2+) site is built by Cys142 and Cys145. 161–165 (IIEIG) lines the substrate pocket. 2 residues coordinate Zn(2+): Cys174 and Cys177.

The protein belongs to the thymidine kinase family.

The enzyme catalyses thymidine + ATP = dTMP + ADP + H(+). The sequence is that of Thymidine kinase (TK) from Choristoneura fumiferana entomopoxvirus (CfEPV).